Here is a 298-residue protein sequence, read N- to C-terminus: Replication protein A 32 kDa subunit B (298 aa).

The segment at residues 89–163 (VRLVGRMLNK…QVVAYSVRRI (75 aa)) is a DNA-binding region (OB).

It belongs to the replication factor A protein 2 family. As to quaternary structure, heterotrimer of RPA1, RPA2 and RPA3 (canonical replication protein A complex). Interacts with RPA1A and RPA3. Post-translationally, phosphorylated in a cell-cycle-dependent manner (from the S phase until mitosis). In response to DNA damage, recruited to DNA-repair nuclear foci, as a hypophosphorylated form.

The protein resides in the nucleus. Component of the replication protein A complex (RPA) required for DNA recombination, repair and replication. The activity of RPA is mediated by single-stranded DNA binding and protein interactions. The sequence is that of Replication protein A 32 kDa subunit B (RPA2B) from Oryza sativa subsp. japonica (Rice).